The chain runs to 25 residues: Gamma-conotoxin PiVIIA (25 aa).

3 disulfide bridges follow: Cys-1–Cys-15, Cys-8–Cys-19, and Cys-14–Cys-24. A 4-hydroxyproline modification is found at Pro-4. A 4-carboxyglutamate mark is found at Glu-13 and Glu-20.

It belongs to the conotoxin O2 superfamily. In terms of tissue distribution, expressed by the venom duct.

The protein localises to the secreted. Functionally, micromolar concentrations of PiVIIA increase the magnitude of the macroscopic calcium current in DRG neurons from rat. An increase, even modest of the calcium current, may have a significant impact in the excitability and electrical activity of neurons, and may set up PiVIIA as a member of the pharmacological family of the gamma-conotoxins. This is Gamma-conotoxin PiVIIA from Conus princeps (Prince cone).